The following is a 230-amino-acid chain: Probable cytokinin riboside 5'-monophosphate phosphoribohydrolase LOG4 (230 aa).

Substrate-binding positions include Glu-91, 109 to 110 (RK), and 126 to 132 (GYGTIEE).

The protein belongs to the LOG family.

The enzyme catalyses N(6)-(dimethylallyl)adenosine 5'-phosphate + H2O = N(6)-dimethylallyladenine + D-ribose 5-phosphate. It catalyses the reaction 9-ribosyl-trans-zeatin 5'-phosphate + H2O = trans-zeatin + D-ribose 5-phosphate. Its function is as follows. Cytokinin-activating enzyme working in the direct activation pathway. Phosphoribohydrolase that converts inactive cytokinin nucleotides to the biologically active free-base forms. In Oryza sativa subsp. japonica (Rice), this protein is Probable cytokinin riboside 5'-monophosphate phosphoribohydrolase LOG4 (LOGL4).